The chain runs to 159 residues: 2-C-methyl-D-erythritol 2,4-cyclodiphosphate synthase (159 aa).

Residues Asp-8 and His-10 each coordinate a divalent metal cation. 4-CDP-2-C-methyl-D-erythritol 2-phosphate is bound by residues 8-10 (DVH) and 34-35 (HS). His-42 contacts a divalent metal cation. 4-CDP-2-C-methyl-D-erythritol 2-phosphate contacts are provided by residues 56-58 (DIG), 61-65 (FPDTD), 100-106 (AQAPKML), 132-135 (TTTE), Phe-139, and Arg-142.

Belongs to the IspF family. Homotrimer. Requires a divalent metal cation as cofactor.

The enzyme catalyses 4-CDP-2-C-methyl-D-erythritol 2-phosphate = 2-C-methyl-D-erythritol 2,4-cyclic diphosphate + CMP. The protein operates within isoprenoid biosynthesis; isopentenyl diphosphate biosynthesis via DXP pathway; isopentenyl diphosphate from 1-deoxy-D-xylulose 5-phosphate: step 4/6. Its function is as follows. Involved in the biosynthesis of isopentenyl diphosphate (IPP) and dimethylallyl diphosphate (DMAPP), two major building blocks of isoprenoid compounds. Catalyzes the conversion of 4-diphosphocytidyl-2-C-methyl-D-erythritol 2-phosphate (CDP-ME2P) to 2-C-methyl-D-erythritol 2,4-cyclodiphosphate (ME-CPP) with a corresponding release of cytidine 5-monophosphate (CMP). The protein is 2-C-methyl-D-erythritol 2,4-cyclodiphosphate synthase of Salmonella arizonae (strain ATCC BAA-731 / CDC346-86 / RSK2980).